Consider the following 326-residue polypeptide: MFPTHRPRRLRSSETLRRMVRETTLTSADFIYPLFAVPGEGVAKEVTSMPGVYQLSIDKIVEEAKEVYDLGIPSIILFGIPTDKDNDATGAWHDCGIVQKAATAVKEAVPELIVAADTCLCEYTPHGHCGYLEVGDLSGRVLNDPTLELLRKTAVSQAKAGADIIAPSGMMDGFVATIRDALDEAGFSDTPIMAYSAKYASAYYGPFRDAAESTPQFGDRRTYQMDPGNSREALKEVELDVAEGADIVMVKPALSYMDIICRIKETTDLPVAAYNVSGEYSMVKAAALNGWIDEERVVLETLTSFKRAGADLILTYHAKDAARWLA.

Zn(2+)-binding residues include Cys-119, Cys-121, and Cys-129. Catalysis depends on Lys-198, which acts as the Schiff-base intermediate with substrate. Residues Arg-208 and Arg-220 each contribute to the 5-aminolevulinate site. Glu-236 is a Mg(2+) binding site. Lys-251 serves as the catalytic Schiff-base intermediate with substrate. The 5-aminolevulinate site is built by Ser-277 and Tyr-316.

This sequence belongs to the ALAD family. In terms of assembly, homooctamer. Zn(2+) serves as cofactor.

The catalysed reaction is 2 5-aminolevulinate = porphobilinogen + 2 H2O + H(+). The protein operates within porphyrin-containing compound metabolism; protoporphyrin-IX biosynthesis; coproporphyrinogen-III from 5-aminolevulinate: step 1/4. In terms of biological role, catalyzes an early step in the biosynthesis of tetrapyrroles. Binds two molecules of 5-aminolevulinate per subunit, each at a distinct site, and catalyzes their condensation to form porphobilinogen. The protein is Delta-aminolevulinic acid dehydratase (hemB) of Synechococcus elongatus (strain ATCC 33912 / PCC 7942 / FACHB-805) (Anacystis nidulans R2).